The sequence spans 237 residues: Class B acid phosphatase (237 aa).

The first 23 residues, 1–23 (MKKITLALSAVCLLFTLNHSANA), serve as a signal peptide directing secretion. Residue aspartate 69 is the Nucleophile of the active site. Mg(2+) contacts are provided by aspartate 69 and aspartate 71. Residue aspartate 71 is the Proton donor of the active site. Substrate contacts are provided by residues 137-138 (TG) and lysine 177. Residue aspartate 192 coordinates Mg(2+).

The protein belongs to the class B bacterial acid phosphatase family. As to quaternary structure, homotetramer. It depends on Mg(2+) as a cofactor.

Its subcellular location is the periplasm. The catalysed reaction is a phosphate monoester + H2O = an alcohol + phosphate. In terms of biological role, dephosphorylates several organic phosphate monoesters. Also has a phosphotransferase activity catalyzing the transfer of low-energy phosphate groups from organic phosphate monoesters to free hydroxyl groups of various organic compounds. This chain is Class B acid phosphatase, found in Salmonella arizonae (strain ATCC BAA-731 / CDC346-86 / RSK2980).